We begin with the raw amino-acid sequence, 494 residues long: MKPLVCSFIVILLILLPTTISHDYSDALTKSILFFEGQRSGYLPREQRMTWRHNSALNDGKNLNVDLVGGYYDAGDNIKFHFPMAFTTTMLAWSAIDFGSYMSPADLRDNLVALRWGSNYLLKTVSQLPNRIFVQVGEPTPDHQCWERPEDMDTPRTAYALEAPKPASDLAGEIAAALAAASIAFKRFDPRYSKLLLDNALRTFEYADSHRGSYTNNPETKLAVCPFYCSVNGYEDELLWGAAWLRRATGKDSYIKYLVENRQSFGSDSNYFEFGWDNKVGGVNVLVAKEVFEKNVAAIAPYKDTAEKLMCSFFLETPGAHMSYSPGGLLYKPGSSQLQNTVALSFLLLTYANYLSKSSQQPLQILSTTPLWYLTQRIANIVGFEKVDYILGDNPMKMSYMIGYGNRYPRQIHHRGASSPSITTHPTPVKCSEGWNSFSSPNPDPNVLVGAVIGGPNIDDKFVGGRTNASETEPTTYINAPFVGLLAYFKANPV.

A signal peptide spans 1-21; the sequence is MKPLVCSFIVILLILLPTTIS. The active-site Nucleophile is the aspartate 76. Histidine 413 is a catalytic residue. N-linked (GlcNAc...) asparagine glycosylation occurs at asparagine 468. Glutamate 473 is a catalytic residue.

The protein belongs to the glycosyl hydrolase 9 (cellulase E) family.

It localises to the secreted. It catalyses the reaction Endohydrolysis of (1-&gt;4)-beta-D-glucosidic linkages in cellulose, lichenin and cereal beta-D-glucans.. This chain is Endoglucanase 22 (GH9B16), found in Arabidopsis thaliana (Mouse-ear cress).